The following is a 318-amino-acid chain: Tumor necrosis factor ligand superfamily member 11 (318 aa).

Residues 1 to 47 (MRRANRDYGKYLRGSEEMGSCPGVPHEGPLHPAPSAPAPAPPPAASR) lie on the Cytoplasmic side of the membrane. The disordered stretch occupies residues 13 to 41 (RGSEEMGSCPGVPHEGPLHPAPSAPAPAP). A compositionally biased stretch (pro residues) spans 31 to 41 (HPAPSAPAPAP). Residues 48-68 (FMFLALLGLGLGQVVCSIALF) traverse the membrane as a helical; Signal-anchor for type II membrane protein segment. Residues 69–318 (LYFRAQMDPN…FGAFKVQDID (250 aa)) lie on the Extracellular side of the membrane. Positions 165–314 (PFAHLTINAA…DATYFGAFKV (150 aa)) constitute a THD domain. Residues asparagine 199 and asparagine 264 are each glycosylated (N-linked (GlcNAc...) asparagine).

It belongs to the tumor necrosis factor family. As to quaternary structure, homotrimer. Interacts with TNFRSF11A and TNFRSF11B. Interacts with FBN1 (via N-terminal domain) in a Ca(+2)-dependent manner. Interacts with TNFAIP6 (via both Link and CUB domains). Post-translationally, the soluble form derives from the membrane form by proteolytic processing. Highly expressed in thymus and bone tissues.

The protein localises to the cell membrane. Its subcellular location is the secreted. In terms of biological role, cytokine that binds to TNFRSF11B/OPG and to TNFRSF11A/RANK. Osteoclast differentiation and activation factor. Augments the ability of dendritic cells to stimulate naive T-cell proliferation. May be an important regulator of interactions between T-cells and dendritic cells and may play a role in the regulation of the T-cell-dependent immune response. May also play an important role in enhanced bone-resorption in humoral hypercalcemia of malignancy. Induces osteoclastogenesis by activating multiple signaling pathways in osteoclast precursor cells, chief among which is induction of long lasting oscillations in the intracellular concentration of Ca (2+) resulting in the activation of NFATC1, which translocates to the nucleus and induces osteoclast-specific gene transcription to allow differentiation of osteoclasts. During osteoclast differentiation, in a TMEM64 and ATP2A2-dependent manner induces activation of CREB1 and mitochondrial ROS generation necessary for proper osteoclast generation. The chain is Tumor necrosis factor ligand superfamily member 11 (Tnfsf11) from Rattus norvegicus (Rat).